Consider the following 1038-residue polypeptide: Translation initiation factor IF-2 (1038 aa).

2 disordered regions span residues 39-346 and 403-451; these read TISE…KWQE and KPKA…PEKV. A compositionally biased stretch (polar residues) spans 103–125; sequence RNTTSNAPEASVANNQIASSEAN. Over residues 157 to 176 the composition is skewed to low complexity; that stretch reads PQKPAAPEAEPEAQSQAPAK. 2 stretches are compositionally biased toward basic and acidic residues: residues 178-197 and 226-243; these read AVEK…ERQP and PILK…DQAK. The span at 407-423 shows a compositional bias: low complexity; sequence ARAATAATAAPISSPTT. A compositionally biased stretch (basic and acidic residues) spans 431–450; it reads NNRDQNRRQETEVKRERPEK. In terms of domain architecture, tr-type G spans 532-705; that stretch reads RRPPVVTIMG…LLVAEVGELS (174 aa). Positions 541 to 548 are G1; sequence GHVDHGKT. GTP is bound at residue 541 to 548; it reads GHVDHGKT. The segment at 566–570 is G2; that stretch reads GITQH. The interval 591 to 594 is G3; that stretch reads DTPG. Residues 591-595 and 645-648 each bind GTP; these read DTPGH and NKID. Residues 645–648 form a G4 region; the sequence is NKID. The G5 stretch occupies residues 681–683; sequence SAI.

Belongs to the TRAFAC class translation factor GTPase superfamily. Classic translation factor GTPase family. IF-2 subfamily.

It is found in the cytoplasm. One of the essential components for the initiation of protein synthesis. Protects formylmethionyl-tRNA from spontaneous hydrolysis and promotes its binding to the 30S ribosomal subunits. Also involved in the hydrolysis of GTP during the formation of the 70S ribosomal complex. The protein is Translation initiation factor IF-2 of Trichormus variabilis (strain ATCC 29413 / PCC 7937) (Anabaena variabilis).